The following is a 276-amino-acid chain: Large ribosomal subunit protein uL2 (276 aa).

The disordered stretch occupies residues 223 to 276 (GVAMNPVDHPHGGGEGRGKGHHPTSPWGLPTKGYKTRRGKRPSDKFIVRRRNEV). Basic and acidic residues-rich tracts occupy residues 230 to 240 (DHPHGGGEGRG) and 263 to 276 (RPSDKFIVRRRNEV).

The protein belongs to the universal ribosomal protein uL2 family. In terms of assembly, part of the 50S ribosomal subunit. Forms a bridge to the 30S subunit in the 70S ribosome.

One of the primary rRNA binding proteins. Required for association of the 30S and 50S subunits to form the 70S ribosome, for tRNA binding and peptide bond formation. It has been suggested to have peptidyltransferase activity; this is somewhat controversial. Makes several contacts with the 16S rRNA in the 70S ribosome. In Thermotoga maritima (strain ATCC 43589 / DSM 3109 / JCM 10099 / NBRC 100826 / MSB8), this protein is Large ribosomal subunit protein uL2.